A 711-amino-acid chain; its full sequence is Ribosomal RNA large subunit methyltransferase K/L (711 aa).

Positions 43–154 (LAYRITLWSR…RGQITLGINF (112 aa)) constitute a THUMP domain.

The protein belongs to the methyltransferase superfamily. RlmKL family.

The protein localises to the cytoplasm. The enzyme catalyses guanosine(2445) in 23S rRNA + S-adenosyl-L-methionine = N(2)-methylguanosine(2445) in 23S rRNA + S-adenosyl-L-homocysteine + H(+). The catalysed reaction is guanosine(2069) in 23S rRNA + S-adenosyl-L-methionine = N(2)-methylguanosine(2069) in 23S rRNA + S-adenosyl-L-homocysteine + H(+). Functionally, specifically methylates the guanine in position 2445 (m2G2445) and the guanine in position 2069 (m7G2069) of 23S rRNA. The polypeptide is Ribosomal RNA large subunit methyltransferase K/L (Shewanella loihica (strain ATCC BAA-1088 / PV-4)).